The primary structure comprises 536 residues: DEAD-box ATP-dependent RNA helicase 41 (536 aa).

A compositionally biased stretch (basic and acidic residues) spans 1–10 (MEQEENHSAD). The tract at residues 1–25 (MEQEENHSADHLSAQPGNGNELEES) is disordered. Residues 40–69 (GEPRCVICGRYGEYICDQTDDDICSVECKT) form an HIT-type zinc finger. Positions 137–165 (MCFSSSGLPEKLVLNLEAAGYVMPTPVQM) match the Q motif motif. The 177-residue stretch at 168-344 (IPSSICNRSL…NSLAKNAIHI (177 aa)) folds into the Helicase ATP-binding domain. 181 to 188 (ADTGSGKT) serves as a coordination point for ATP. The DEAD box motif lies at 293–296 (DEVD). Residues 355–518 (SVKQVVIWVE…PIPRELANSK (164 aa)) enclose the Helicase C-terminal domain.

Belongs to the DEAD box helicase family. DDX59 subfamily.

The enzyme catalyses ATP + H2O = ADP + phosphate + H(+). This is DEAD-box ATP-dependent RNA helicase 41 from Oryza sativa subsp. japonica (Rice).